The primary structure comprises 84 residues: Toxin Cll9 (84 aa).

The signal sequence occupies residues 1-19; sequence MNSLLMITACLILIGTVWA. The region spanning 20 to 83 is the LCN-type CS-alpha/beta domain; that stretch reads EDGYLFDKRK…ISRTPGKTCK (64 aa). 4 cysteine pairs are disulfide-bonded: cysteine 31–cysteine 82, cysteine 35–cysteine 58, cysteine 44–cysteine 63, and cysteine 48–cysteine 65.

Expressed by the venom gland.

It is found in the secreted. Functionally, beta toxins bind voltage-independently at site-4 of sodium channels (Nav) and shift the voltage of activation toward more negative potentials thereby affecting sodium channel activation and promoting spontaneous and repetitive firing. Has some action on peripheral ganglia, but not on other sodium channels such as those from cerebellum granular cells in culture. Induces sleep, suggesting a strong antiepileptic action. This is Toxin Cll9 from Centruroides limpidus (Mexican scorpion).